We begin with the raw amino-acid sequence, 103 residues long: Putative membrane protein insertion efficiency factor (103 aa).

The protein belongs to the UPF0161 family.

It localises to the cell inner membrane. Functionally, could be involved in insertion of integral membrane proteins into the membrane. This Chlamydia felis (strain Fe/C-56) (Chlamydophila felis) protein is Putative membrane protein insertion efficiency factor.